A 517-amino-acid polypeptide reads, in one-letter code: Cytochrome P450 11B, mitochondrial (517 aa).

A mitochondrion-targeting transit peptide spans 1-45 (MLEKTAARQIGSCLMRCRTLDTTSPLWTGFSRLSTAPLIHEARED). A heme-binding site is contributed by cysteine 465.

It belongs to the cytochrome P450 family. It depends on heme as a cofactor.

The protein localises to the mitochondrion membrane. The catalysed reaction is a steroid + 2 reduced [adrenodoxin] + O2 + 2 H(+) = an 11beta-hydroxysteroid + 2 oxidized [adrenodoxin] + H2O. Has 11 beta-hydroxylation, 18-hydroxylation activities and aldosterone synthetic activity. Catalyzes the final steps of glucocorticoid and mineralocorticoid biosynthesis. This chain is Cytochrome P450 11B, mitochondrial (CYP11B), found in Aquarana catesbeiana (American bullfrog).